A 140-amino-acid polypeptide reads, in one-letter code: Putative pre-16S rRNA nuclease (140 aa).

It belongs to the YqgF nuclease family.

Its subcellular location is the cytoplasm. Could be a nuclease involved in processing of the 5'-end of pre-16S rRNA. In Lachnospira eligens (strain ATCC 27750 / DSM 3376 / VPI C15-48 / C15-B4) (Eubacterium eligens), this protein is Putative pre-16S rRNA nuclease.